Here is a 508-residue protein sequence, read N- to C-terminus: Phenylalanine--tRNA ligase alpha subunit (508 aa).

An N-acetylalanine modification is found at A2. Phosphoserine occurs at positions 193 and 301. K311 bears the N6-acetyllysine mark. L-phenylalanine-binding positions include T329, 372–374 (QIE), and Y412. A Mg(2+)-binding site is contributed by E414. L-phenylalanine is bound at residue F438.

This sequence belongs to the class-II aminoacyl-tRNA synthetase family. Phe-tRNA synthetase alpha subunit type 2 subfamily. As to quaternary structure, heterotetramer; dimer of two heterodimers formed by FARSA and FARSB. It depends on Mg(2+) as a cofactor.

It localises to the cytoplasm. It carries out the reaction tRNA(Phe) + L-phenylalanine + ATP = L-phenylalanyl-tRNA(Phe) + AMP + diphosphate + H(+). The polypeptide is Phenylalanine--tRNA ligase alpha subunit (Farsa) (Rattus norvegicus (Rat)).